The following is a 476-amino-acid chain: Ribulose bisphosphate carboxylase large chain (476 aa).

A propeptide spanning residues 1 to 2 (MS) is cleaved from the precursor. At Pro3 the chain carries N-acetylproline. An N6,N6,N6-trimethyllysine modification is found at Lys14. Residues Asn123 and Thr173 each contribute to the substrate site. The active-site Proton acceptor is the Lys175. Lys177 provides a ligand contact to substrate. Mg(2+) is bound by residues Lys201, Asp203, and Glu204. Lys201 bears the N6-carboxylysine mark. His294 acts as the Proton acceptor in catalysis. Residues Arg295, His327, and Ser379 each contribute to the substrate site.

This sequence belongs to the RuBisCO large chain family. Type I subfamily. Heterohexadecamer of 8 large chains and 8 small chains; disulfide-linked. The disulfide link is formed within the large subunit homodimers. It depends on Mg(2+) as a cofactor. Post-translationally, the disulfide bond which can form in the large chain dimeric partners within the hexadecamer appears to be associated with oxidative stress and protein turnover.

It is found in the plastid. The protein localises to the chloroplast. The catalysed reaction is 2 (2R)-3-phosphoglycerate + 2 H(+) = D-ribulose 1,5-bisphosphate + CO2 + H2O. The enzyme catalyses D-ribulose 1,5-bisphosphate + O2 = 2-phosphoglycolate + (2R)-3-phosphoglycerate + 2 H(+). RuBisCO catalyzes two reactions: the carboxylation of D-ribulose 1,5-bisphosphate, the primary event in carbon dioxide fixation, as well as the oxidative fragmentation of the pentose substrate in the photorespiration process. Both reactions occur simultaneously and in competition at the same active site. The chain is Ribulose bisphosphate carboxylase large chain from Liriodendron tulipifera (Tuliptree).